A 450-amino-acid polypeptide reads, in one-letter code: Adenylosuccinate lyase (450 aa).

N(6)-(1,2-dicarboxyethyl)-AMP contacts are provided by residues 9–10 (RY), 75–77 (HHD), and 101–102 (TS). Histidine 149 functions as the Proton donor/acceptor in the catalytic mechanism. Glutamine 223 is a binding site for N(6)-(1,2-dicarboxyethyl)-AMP. The Proton donor/acceptor role is filled by serine 273. N(6)-(1,2-dicarboxyethyl)-AMP contacts are provided by residues serine 274, 279–281 (KRN), and 318–322 (SVERV).

It belongs to the lyase 1 family. Adenylosuccinate lyase subfamily. Homotetramer. Residues from neighboring subunits contribute catalytic and substrate-binding residues to each active site.

The enzyme catalyses N(6)-(1,2-dicarboxyethyl)-AMP = fumarate + AMP. It carries out the reaction (2S)-2-[5-amino-1-(5-phospho-beta-D-ribosyl)imidazole-4-carboxamido]succinate = 5-amino-1-(5-phospho-beta-D-ribosyl)imidazole-4-carboxamide + fumarate. The protein operates within purine metabolism; AMP biosynthesis via de novo pathway; AMP from IMP: step 2/2. It participates in purine metabolism; IMP biosynthesis via de novo pathway; 5-amino-1-(5-phospho-D-ribosyl)imidazole-4-carboxamide from 5-amino-1-(5-phospho-D-ribosyl)imidazole-4-carboxylate: step 2/2. Its function is as follows. Catalyzes two reactions in de novo purine nucleotide biosynthesis. Catalyzes the breakdown of 5-aminoimidazole- (N-succinylocarboxamide) ribotide (SAICAR or 2-[5-amino-1-(5-phospho-beta-D-ribosyl)imidazole-4-carboxamido]succinate) to 5-aminoimidazole-4-carboxamide ribotide (AICAR or 5-amino-1-(5-phospho-beta-D-ribosyl)imidazole-4-carboxamide) and fumarate, and of adenylosuccinate (ADS or N(6)-(1,2-dicarboxyethyl)-AMP) to adenosine monophosphate (AMP) and fumarate. In Pyrococcus abyssi (strain GE5 / Orsay), this protein is Adenylosuccinate lyase (purB).